We begin with the raw amino-acid sequence, 152 residues long: Prefoldin subunit alpha (152 aa).

Residues 110–152 form a disordered region; sequence ETQEEVDELESESQELEQQAQQMQQQMQQQQMQQMQQSQGDEE. The segment covering 111–124 has biased composition (acidic residues); the sequence is TQEEVDELESESQE. Positions 125–152 are enriched in low complexity; it reads LEQQAQQMQQQMQQQQMQQMQQSQGDEE.

This sequence belongs to the prefoldin alpha subunit family. As to quaternary structure, heterohexamer of two alpha and four beta subunits.

The protein resides in the cytoplasm. Functionally, molecular chaperone capable of stabilizing a range of proteins. Seems to fulfill an ATP-independent, HSP70-like function in archaeal de novo protein folding. In Halorubrum lacusprofundi (strain ATCC 49239 / DSM 5036 / JCM 8891 / ACAM 34), this protein is Prefoldin subunit alpha.